The following is a 548-amino-acid chain: Folylpolyglutamate synthase (548 aa).

130–133 contributes to the ATP binding site; sequence GKGS. Positions 157, 234, and 262 each coordinate Mg(2+). ATP is bound by residues arginine 382 and aspartate 396.

Belongs to the folylpolyglutamate synthase family. A monovalent cation is required as a cofactor.

It is found in the mitochondrion inner membrane. The protein localises to the mitochondrion matrix. The protein resides in the cytoplasm. It catalyses the reaction (6S)-5,6,7,8-tetrahydrofolyl-(gamma-L-Glu)(n) + L-glutamate + ATP = (6S)-5,6,7,8-tetrahydrofolyl-(gamma-L-Glu)(n+1) + ADP + phosphate + H(+). The protein operates within cofactor biosynthesis; tetrahydrofolylpolyglutamate biosynthesis. Catalyzes conversion of folates to polyglutamate derivatives allowing concentration of folate compounds in the cell and the intracellular retention of these cofactors, which are important substrates for most of the folate-dependent enzymes that are involved in one-carbon transfer reactions involved in purine, pyrimidine and amino acid synthesis. Required for methionine synthesis and maintenance of intact mitochondrial DNA. Involved in telomere maintenance. The protein is Folylpolyglutamate synthase of Saccharomyces cerevisiae (strain RM11-1a) (Baker's yeast).